Consider the following 67-residue polypeptide: Small ribosomal subunit protein eS17 (67 aa).

The protein belongs to the eukaryotic ribosomal protein eS17 family.

This Pyrococcus abyssi (strain GE5 / Orsay) protein is Small ribosomal subunit protein eS17.